The sequence spans 526 residues: Bifunctional purine biosynthesis protein PurH (526 aa).

Residues 1–145 (MIRTALLSVS…KNHQDVTVLI (145 aa)) enclose the MGS-like domain.

Belongs to the PurH family.

It catalyses the reaction (6R)-10-formyltetrahydrofolate + 5-amino-1-(5-phospho-beta-D-ribosyl)imidazole-4-carboxamide = 5-formamido-1-(5-phospho-D-ribosyl)imidazole-4-carboxamide + (6S)-5,6,7,8-tetrahydrofolate. The enzyme catalyses IMP + H2O = 5-formamido-1-(5-phospho-D-ribosyl)imidazole-4-carboxamide. Its pathway is purine metabolism; IMP biosynthesis via de novo pathway; 5-formamido-1-(5-phospho-D-ribosyl)imidazole-4-carboxamide from 5-amino-1-(5-phospho-D-ribosyl)imidazole-4-carboxamide (10-formyl THF route): step 1/1. It functions in the pathway purine metabolism; IMP biosynthesis via de novo pathway; IMP from 5-formamido-1-(5-phospho-D-ribosyl)imidazole-4-carboxamide: step 1/1. This chain is Bifunctional purine biosynthesis protein PurH, found in Polynucleobacter necessarius subsp. necessarius (strain STIR1).